We begin with the raw amino-acid sequence, 187 residues long: UPF0301 protein ETA_28320 (187 aa).

Belongs to the UPF0301 (AlgH) family.

This Erwinia tasmaniensis (strain DSM 17950 / CFBP 7177 / CIP 109463 / NCPPB 4357 / Et1/99) protein is UPF0301 protein ETA_28320.